We begin with the raw amino-acid sequence, 215 residues long: Somatotropin (215 aa).

The N-terminal stretch at 1 to 25 (MAPGMRVCLLLLIAFTLLGPQRAAA) is a signal peptide. H44 contributes to the Zn(2+) binding site. A Phosphoserine modification is found at S130. Position 197 (E197) interacts with Zn(2+).

This sequence belongs to the somatotropin/prolactin family.

The protein localises to the secreted. In terms of biological role, plays an important role in growth control. Its major role in stimulating body growth is to stimulate the liver and other tissues to secrete IGF1. It stimulates both the differentiation and proliferation of myoblasts. It also stimulates amino acid uptake and protein synthesis in muscle and other tissues. The polypeptide is Somatotropin (GH1) (Monodelphis domestica (Gray short-tailed opossum)).